Consider the following 2054-residue polypeptide: Multiple PDZ domain protein (2054 aa).

The L27 domain maps to 3–63 (ETIDKNRALQ…SLQQLKDQVN (61 aa)). Positions 138-225 (IFELLKPPCG…TIQLVIARGS (88 aa)) constitute a PDZ 1 domain. Ser231 carries the post-translational modification Phosphoserine. PDZ domains lie at 258-338 (TIEL…ARGA), 377-463 (DVEL…MRKG), 545-626 (VAHV…CRRT), and 692-778 (AIEL…VAKP). Ser782 and Ser1065 each carry phosphoserine. Positions 995–1076 (TVTIAKGSSS…IGPDIKITYV (82 aa)) constitute a PDZ 6 domain. Positions 1110–1129 (PELPEREEGEGEESELQNAA) are disordered. The region spanning 1138-1230 (RVELWREPSK…PVVFMVQSIV (93 aa)) is the PDZ 7 domain. Residue Arg1157 is modified to Omega-N-methylarginine. The span at 1261-1273 (LQLTSDKAPSQSE) shows a compositional bias: polar residues. A disordered region spans residues 1261–1312 (LQLTSDKAPSQSESESEKATLCSVPSSSPSVFSEMSSDYAQPSATTVAEDED). The segment covering 1283–1297 (SVPSSSPSVFSEMSS) has biased composition (low complexity). The region spanning 1337–1420 (MIELEKGHSG…KVKIIFIRNA (84 aa)) is the PDZ 8 domain. Positions 1433–1454 (AADPLPSTSESPQNKEVEPSIT) are disordered. The region spanning 1470-1551 (HLELPKDQGG…TVKLTVGAEN (82 aa)) is the PDZ 9 domain. The segment at 1560–1594 (AAVTASGERKDSSQTPAVPAPDLEPIPSTSRSSTP) is disordered. 2 consecutive PDZ domains span residues 1613-1696 (TIEI…YRDE) and 1709-1791 (TVEL…GRIK). Residues 1795–1834 (FHSERRPSQSSQVSESSLSSFSLPRSGIHTSESSESSAKK) form a disordered region. Phosphoserine is present on residues Ser1802 and Ser1808. The span at 1802–1834 (SQSSQVSESSLSSFSLPRSGIHTSESSESSAKK) shows a compositional bias: low complexity. 2 PDZ domains span residues 1846-1932 (TVEI…VAGG) and 1971-2054 (TITL…MVLS).

In terms of assembly, interacts with F11R/JAM, CLDN1, NG2, CXADR, CRB1, MPP4 and PALS1, HTR2A, HTR2B, PLEKHA1/TAPP1 and PLEKHA2/TAPP2. Interacts with CXADR. Interacts with HTR2C, CLDN5, DLG4, GRIN1, SYNGAP1, CAMK2A and CAMK2B. Interacts with FAT4 (via cytoplasmic domain). Interacts with DLL1. Abundant in all cerebral cortical layers, especially the piriform cortex, the pyramidal cells of the CA1-CA3 subfields of the hippocampus, as well as the granular layer of the dentate gyrus. Detected in the internal granular layer and the mitral cell layer of the olfactory bulb; in the medial habenular nucleus; and in amygdaloid, thalamic, hypothalamic, and pontine nuclei. In the cerebellum, found at high levels in the granular layer. Detected in the lateral ventricle. Expression overlaps with 5-HT2C receptor expression in all regions of the brain including the choroid plexus, where 5-HT2C receptors are highly enriched.

Its subcellular location is the endomembrane system. The protein resides in the cell junction. It localises to the tight junction. The protein localises to the synapse. It is found in the apical cell membrane. Its subcellular location is the postsynaptic density. The protein resides in the cell projection. It localises to the dendrite. The protein localises to the synaptosome. Member of the NMDAR signaling complex that may play a role in control of AMPAR potentiation and synaptic plasticity in excitatory synapses. Promotes clustering of HT2RC at the cell surface. The sequence is that of Multiple PDZ domain protein (Mpdz) from Rattus norvegicus (Rat).